The following is a 37-amino-acid chain: Large ribosomal subunit protein bL36 (37 aa).

This sequence belongs to the bacterial ribosomal protein bL36 family.

This Magnetococcus marinus (strain ATCC BAA-1437 / JCM 17883 / MC-1) protein is Large ribosomal subunit protein bL36.